A 503-amino-acid chain; its full sequence is UDP-N-acetylmuramoylalanine--D-glutamate ligase (503 aa).

An ATP-binding site is contributed by 129–135 (GTNGKTT).

The protein belongs to the MurCDEF family.

The protein resides in the cytoplasm. It carries out the reaction UDP-N-acetyl-alpha-D-muramoyl-L-alanine + D-glutamate + ATP = UDP-N-acetyl-alpha-D-muramoyl-L-alanyl-D-glutamate + ADP + phosphate + H(+). It participates in cell wall biogenesis; peptidoglycan biosynthesis. Functionally, cell wall formation. Catalyzes the addition of glutamate to the nucleotide precursor UDP-N-acetylmuramoyl-L-alanine (UMA). This Burkholderia vietnamiensis (strain G4 / LMG 22486) (Burkholderia cepacia (strain R1808)) protein is UDP-N-acetylmuramoylalanine--D-glutamate ligase.